Reading from the N-terminus, the 556-residue chain is Formate--tetrahydrofolate ligase (556 aa).

65–72 (TPAGEGKS) contributes to the ATP binding site.

This sequence belongs to the formate--tetrahydrofolate ligase family.

The enzyme catalyses (6S)-5,6,7,8-tetrahydrofolate + formate + ATP = (6R)-10-formyltetrahydrofolate + ADP + phosphate. It functions in the pathway one-carbon metabolism; tetrahydrofolate interconversion. The chain is Formate--tetrahydrofolate ligase from Clostridium acetobutylicum (strain ATCC 824 / DSM 792 / JCM 1419 / IAM 19013 / LMG 5710 / NBRC 13948 / NRRL B-527 / VKM B-1787 / 2291 / W).